We begin with the raw amino-acid sequence, 211 residues long: Protein-methionine-sulfoxide reductase heme-binding subunit MsrQ (211 aa).

The next 5 helical transmembrane spans lie at 10–30 (WLKVCLHLAGLLPFLWLVWAI), 82–102 (LWCFAWATLHLTSYALLELGV), 116–136 (PYLTLGIISWVILLALAFTST), 153–173 (FVYLVAILAPIHYLWSVKIIS), and 178–198 (IYAGLAVLLLALRYKKLLSLF).

Belongs to the MsrQ family. In terms of assembly, heterodimer of a catalytic subunit (MsrP) and a heme-binding subunit (MsrQ). Requires FMN as cofactor. The cofactor is heme b.

The protein localises to the cell inner membrane. Part of the MsrPQ system that repairs oxidized periplasmic proteins containing methionine sulfoxide residues (Met-O), using respiratory chain electrons. Thus protects these proteins from oxidative-stress damage caused by reactive species of oxygen and chlorine generated by the host defense mechanisms. MsrPQ is essential for the maintenance of envelope integrity under bleach stress, rescuing a wide series of structurally unrelated periplasmic proteins from methionine oxidation, including the primary periplasmic chaperone SurA and the lipoprotein Pal. MsrQ provides electrons for reduction to the reductase catalytic subunit MsrP, using the quinone pool of the respiratory chain. This is Protein-methionine-sulfoxide reductase heme-binding subunit MsrQ from Escherichia coli (strain 55989 / EAEC).